Reading from the N-terminus, the 337-residue chain is 1-aminocyclopropane-1-carboxylate deaminase (337 aa).

At Lys-50 the chain carries N6-(pyridoxal phosphate)lysine. Catalysis depends on Ser-77, which acts as the Nucleophile.

This sequence belongs to the ACC deaminase/D-cysteine desulfhydrase family. Homotrimer. It depends on pyridoxal 5'-phosphate as a cofactor.

It carries out the reaction 1-aminocyclopropane-1-carboxylate + H2O = 2-oxobutanoate + NH4(+). Catalyzes a cyclopropane ring-opening reaction, the irreversible conversion of 1-aminocyclopropane-1-carboxylate (ACC) to ammonia and alpha-ketobutyrate. Allows growth on ACC as a nitrogen source. In Rhizobium radiobacter (Agrobacterium tumefaciens), this protein is 1-aminocyclopropane-1-carboxylate deaminase.